Reading from the N-terminus, the 196-residue chain is Peptidyl-tRNA hydrolase (196 aa).

Y18 is a tRNA binding site. H23 acts as the Proton acceptor in catalysis. The tRNA site is built by F69, N71, and N117.

Belongs to the PTH family. In terms of assembly, monomer.

It is found in the cytoplasm. It carries out the reaction an N-acyl-L-alpha-aminoacyl-tRNA + H2O = an N-acyl-L-amino acid + a tRNA + H(+). Its function is as follows. Hydrolyzes ribosome-free peptidyl-tRNAs (with 1 or more amino acids incorporated), which drop off the ribosome during protein synthesis, or as a result of ribosome stalling. In terms of biological role, catalyzes the release of premature peptidyl moieties from peptidyl-tRNA molecules trapped in stalled 50S ribosomal subunits, and thus maintains levels of free tRNAs and 50S ribosomes. The protein is Peptidyl-tRNA hydrolase of Aliivibrio salmonicida (strain LFI1238) (Vibrio salmonicida (strain LFI1238)).